A 589-amino-acid chain; its full sequence is MDAQVGDNPVAQAIAHALVEGFNKHYRIFRGTSRRAKEYFEAGDWRAQLDAVRDRVQFYDDRVDETVRRLLEEFDADSLDDATWQQVKLHFIGALINHKQPELAETFFNSVGCKILHRTYFNNDYIFARPAISTEYIESYPPVYSSYYPQDGGLRATIRRIIEDFDWQRPFEDLDRDIDCIMRAALAHLGEWPAMEVNCQLQVLYSAFYRNKTAYIIGKVINGWQDYPFTLAVRHGASGRLVIDTILLDPWRISVLFSLSRAYFMVDMEVPSGYVQFLRSIMPNKPRSELYTMLGLGKQGKTMFFRDLVAHLRHSNDQFIIAPGIRGLVMLVFTLPSYPYVFKIIKDVFGSSKNMDRATVKRKYLMVKQVDRVGRMADTLEFSYAALPLSRFHPELLEELRTLAPSAFEIDGDALVLKHFYIERRMTPLNIHLEKASDGEVEAAVHEYGNAIRELAIANIFPGDMLWKNFGVTRYGRVVFYDYDEIEYMTSMNFRRIPPAPHEDMELSGEPWYSAGPMDVFPEEFATFLLGSPRVRKAFMKYHRDLLEPAFWQAAQQGVRDGHVEDFFPYPAELRFSVMFPATPVAAQD.

ATP contacts are provided by residues 322–328 (APGIRGL) and lysine 343. Aspartate 378 is a catalytic residue.

The protein belongs to the AceK family.

The protein localises to the cytoplasm. The enzyme catalyses L-seryl-[isocitrate dehydrogenase] + ATP = O-phospho-L-seryl-[isocitrate dehydrogenase] + ADP + H(+). In terms of biological role, bifunctional enzyme which can phosphorylate or dephosphorylate isocitrate dehydrogenase (IDH) on a specific serine residue. This is a regulatory mechanism which enables bacteria to bypass the Krebs cycle via the glyoxylate shunt in response to the source of carbon. When bacteria are grown on glucose, IDH is fully active and unphosphorylated, but when grown on acetate or ethanol, the activity of IDH declines drastically concomitant with its phosphorylation. The chain is Isocitrate dehydrogenase kinase/phosphatase from Azoarcus sp. (strain BH72).